Here is a 238-residue protein sequence, read N- to C-terminus: Large ribosomal subunit protein uL1 (238 aa).

The protein belongs to the universal ribosomal protein uL1 family. Part of the 50S ribosomal subunit.

In terms of biological role, binds directly to 23S rRNA. The L1 stalk is quite mobile in the ribosome, and is involved in E site tRNA release. Functionally, protein L1 is also a translational repressor protein, it controls the translation of the L11 operon by binding to its mRNA. The chain is Large ribosomal subunit protein uL1 from Salinispora arenicola (strain CNS-205).